The sequence spans 538 residues: NAD(P)H-quinone oxidoreductase chain 4 1 (538 aa).

Transmembrane regions (helical) follow at residues 7–27 (FPWL…IPII), 37–57 (WYGL…FWHY), 88–108 (LSMP…FAAW), 116–136 (LFYG…VAQD), 137–157 (LLLF…LISI), 170–190 (FILY…ALAF), 210–230 (AIEL…LPIF), 244–264 (SAPG…YALI), 278–298 (FAPV…CCAF), 315–335 (MGFV…GAVL), 336–356 (QMVS…VTYE), 388–408 (LALP…GIAT), and 418–438 (VVVV…LLSM).

The protein belongs to the complex I subunit 4 family.

The protein localises to the cellular thylakoid membrane. The catalysed reaction is a plastoquinone + NADH + (n+1) H(+)(in) = a plastoquinol + NAD(+) + n H(+)(out). The enzyme catalyses a plastoquinone + NADPH + (n+1) H(+)(in) = a plastoquinol + NADP(+) + n H(+)(out). Functionally, NDH-1 shuttles electrons from NAD(P)H, via FMN and iron-sulfur (Fe-S) centers, to quinones in the respiratory chain. The immediate electron acceptor for the enzyme in this species is believed to be plastoquinone. Couples the redox reaction to proton translocation (for every two electrons transferred, four hydrogen ions are translocated across the cytoplasmic membrane), and thus conserves the redox energy in a proton gradient. This chain is NAD(P)H-quinone oxidoreductase chain 4 1, found in Nostoc sp. (strain PCC 7120 / SAG 25.82 / UTEX 2576).